A 115-amino-acid polypeptide reads, in one-letter code: NADH-ubiquinone oxidoreductase chain 3 (115 aa).

The next 3 helical transmembrane spans lie at phenylalanine 3–tryptophan 23, phenylalanine 55–leucine 75, and leucine 84–tyrosine 104.

It belongs to the complex I subunit 3 family. In terms of assembly, core subunit of respiratory chain NADH dehydrogenase (Complex I) which is composed of 45 different subunits. Interacts with TMEM186. Interacts with TMEM242.

It localises to the mitochondrion inner membrane. It carries out the reaction a ubiquinone + NADH + 5 H(+)(in) = a ubiquinol + NAD(+) + 4 H(+)(out). Functionally, core subunit of the mitochondrial membrane respiratory chain NADH dehydrogenase (Complex I) which catalyzes electron transfer from NADH through the respiratory chain, using ubiquinone as an electron acceptor. Essential for the catalytic activity of complex I. This chain is NADH-ubiquinone oxidoreductase chain 3, found in Pan troglodytes (Chimpanzee).